A 69-amino-acid polypeptide reads, in one-letter code: Putative membrane protein insertion efficiency factor (69 aa).

The protein belongs to the UPF0161 family.

The protein resides in the cell membrane. In terms of biological role, could be involved in insertion of integral membrane proteins into the membrane. The protein is Putative membrane protein insertion efficiency factor of Alkaliphilus oremlandii (strain OhILAs) (Clostridium oremlandii (strain OhILAs)).